The primary structure comprises 822 residues: DNA gyrase subunit A (822 aa).

The Topo IIA-type catalytic domain occupies 32 to 497 (LPDVRDGLKP…QVLSLEDEDL (466 aa)). The O-(5'-phospho-DNA)-tyrosine intermediate role is filled by Tyr120. Residues 524-530 (QKRGGRG) carry the GyrA-box motif.

The protein belongs to the type II topoisomerase GyrA/ParC subunit family. As to quaternary structure, heterotetramer, composed of two GyrA and two GyrB chains. In the heterotetramer, GyrA contains the active site tyrosine that forms a transient covalent intermediate with DNA, while GyrB binds cofactors and catalyzes ATP hydrolysis.

The protein localises to the cytoplasm. It carries out the reaction ATP-dependent breakage, passage and rejoining of double-stranded DNA.. Functionally, a type II topoisomerase that negatively supercoils closed circular double-stranded (ds) DNA in an ATP-dependent manner to modulate DNA topology and maintain chromosomes in an underwound state. Negative supercoiling favors strand separation, and DNA replication, transcription, recombination and repair, all of which involve strand separation. Also able to catalyze the interconversion of other topological isomers of dsDNA rings, including catenanes and knotted rings. Type II topoisomerases break and join 2 DNA strands simultaneously in an ATP-dependent manner. This Streptococcus pneumoniae serotype 4 (strain ATCC BAA-334 / TIGR4) protein is DNA gyrase subunit A.